A 236-amino-acid polypeptide reads, in one-letter code: 1-(5-phosphoribosyl)-5-[(5-phosphoribosylamino)methylideneamino] imidazole-4-carboxamide isomerase (236 aa).

Residue Asp-8 is the Proton acceptor of the active site. The active-site Proton donor is Asp-128.

It belongs to the HisA/HisF family.

It localises to the cytoplasm. It carries out the reaction 1-(5-phospho-beta-D-ribosyl)-5-[(5-phospho-beta-D-ribosylamino)methylideneamino]imidazole-4-carboxamide = 5-[(5-phospho-1-deoxy-D-ribulos-1-ylimino)methylamino]-1-(5-phospho-beta-D-ribosyl)imidazole-4-carboxamide. The protein operates within amino-acid biosynthesis; L-histidine biosynthesis; L-histidine from 5-phospho-alpha-D-ribose 1-diphosphate: step 4/9. The protein is 1-(5-phosphoribosyl)-5-[(5-phosphoribosylamino)methylideneamino] imidazole-4-carboxamide isomerase of Nitrosopumilus maritimus (strain SCM1).